The following is a 256-amino-acid chain: Alcohol dehydrogenase (256 aa).

An NAD(+)-binding site is contributed by 12 to 35 (FVAGLGGIGLDTSKELVKRDLKNL). S140 provides a ligand contact to substrate. Y153 acts as the Proton acceptor in catalysis.

The protein belongs to the short-chain dehydrogenases/reductases (SDR) family. Homodimer.

It carries out the reaction a primary alcohol + NAD(+) = an aldehyde + NADH + H(+). It catalyses the reaction a secondary alcohol + NAD(+) = a ketone + NADH + H(+). This chain is Alcohol dehydrogenase (Adh), found in Drosophila mauritiana (Fruit fly).